We begin with the raw amino-acid sequence, 129 residues long: Keratin-associated protein 5-6 (129 aa).

6 consecutive repeat copies span residues 28–31, 34–37, 40–43, 90–93, 109–112, and 119–122. A 6 X 4 AA repeats of C-C-X-P region spans residues 28–112; that stretch reads CCVPICCCKP…SCCQSSCCKP (85 aa).

Belongs to the KRTAP type 5 family. As to quaternary structure, interacts with hair keratins. As to expression, expressed in hair root and not in skin. Expressed also in liver and skeletal muscle.

Functionally, in the hair cortex, hair keratin intermediate filaments are embedded in an interfilamentous matrix, consisting of hair keratin-associated protein (KRTAP), which are essential for the formation of a rigid and resistant hair shaft through their extensive disulfide bond cross-linking with abundant cysteine residues of hair keratins. The matrix proteins include the high-sulfur and high-glycine-tyrosine keratins. The polypeptide is Keratin-associated protein 5-6 (KRTAP5-6) (Homo sapiens (Human)).